The sequence spans 132 residues: UPF0299 membrane protein YohJ (132 aa).

The next 4 helical transmembrane spans lie at 7–27 (IIWQYLRAFVLIYACLYAGIF), 31–51 (LLPVTIPGSIIGMLILFVLLA), 63–83 (GCYVLIRYMALLFVPIGVGVM), and 93–113 (FGPVVVSCAVCTLVVFLVVSW).

Belongs to the UPF0299 family.

Its subcellular location is the cell inner membrane. This chain is UPF0299 membrane protein YohJ, found in Shigella boydii serotype 18 (strain CDC 3083-94 / BS512).